The following is a 293-amino-acid chain: N-acetylneuraminate lyase (293 aa).

Residues Ser48 and Ser49 each coordinate aceneuramate. Tyr137 acts as the Proton donor in catalysis. The Schiff-base intermediate with substrate role is filled by Lys165. Thr167, Gly189, Asp191, Glu192, and Ser208 together coordinate aceneuramate.

The protein belongs to the DapA family. NanA subfamily. Homotetramer.

It localises to the cytoplasm. The catalysed reaction is aceneuramate = aldehydo-N-acetyl-D-mannosamine + pyruvate. It functions in the pathway amino-sugar metabolism; N-acetylneuraminate degradation; D-fructose 6-phosphate from N-acetylneuraminate: step 1/5. Functionally, catalyzes the reversible aldol cleavage of N-acetylneuraminic acid (sialic acid; Neu5Ac) to form pyruvate and N-acetylmannosamine (ManNAc) via a Schiff base intermediate. The chain is N-acetylneuraminate lyase from Staphylococcus aureus (strain MRSA252).